The sequence spans 138 residues: Cysteine desulfuration protein SufE (138 aa).

The active-site Cysteine persulfide intermediate is cysteine 51.

This sequence belongs to the SufE family. Homodimer. Interacts with SufS.

The protein localises to the cytoplasm. It participates in cofactor biosynthesis; iron-sulfur cluster biosynthesis. Functionally, participates in cysteine desulfuration mediated by SufS. Cysteine desulfuration mobilizes sulfur from L-cysteine to yield L-alanine and constitutes an essential step in sulfur metabolism for biosynthesis of a variety of sulfur-containing biomolecules. Functions as a sulfur acceptor for SufS, by mediating the direct transfer of the sulfur atom from the S-sulfanylcysteine of SufS, an intermediate product of cysteine desulfuration process. This Escherichia coli O157:H7 protein is Cysteine desulfuration protein SufE.